The sequence spans 641 residues: Sodium-dependent nutrient amino acid transporter 1 (641 aa).

The disordered stretch occupies residues 1-36 (MELKGVQPSNGSANGNGTTNAASTEKTDAEKHTPER). Residues 1-38 (MELKGVQPSNGSANGNGTTNAASTEKTDAEKHTPERTN) lie on the Cytoplasmic side of the membrane. Positions 9-24 (SNGSANGNGTTNAAST) are enriched in low complexity. Residues 25–35 (EKTDAEKHTPE) show a composition bias toward basic and acidic residues. A run of 3 helical transmembrane segments spans residues 39-59 (WGNG…LGNV), 72-92 (GAFL…MYYL), and 109-129 (SVVP…ICII). 2 N-linked (GlcNAc...) asparagine glycosylation sites follow: N183 and N188. 9 helical membrane passes run 229–249 (PDWK…LVIM), 258–278 (AAYF…IRAV), 307–327 (AVVQ…MFAS), 341–361 (IVTT…FAIL), 401–421 (LFSV…IVAL), 441–461 (VALI…TPGG), 474–494 (TYVV…VYGL), 516–536 (CWSF…MVTI), and 552–572 (IAGW…GLWY).

It belongs to the sodium:neurotransmitter symporter (SNF) (TC 2.A.22) family.

It is found in the membrane. Its function is as follows. Unusual broad substrate spectrum amino acid:sodium cotransporter that promotes absorption of the D isomers of essential amino acids. Neutral amino acids are the preferred substrates, especially methionine and phenylalanine. The chain is Sodium-dependent nutrient amino acid transporter 1 from Drosophila erecta (Fruit fly).